The sequence spans 440 residues: Argininosuccinate lyase (440 aa).

It belongs to the lyase 1 family. Argininosuccinate lyase subfamily.

It localises to the cytoplasm. The catalysed reaction is 2-(N(omega)-L-arginino)succinate = fumarate + L-arginine. It participates in amino-acid biosynthesis; L-arginine biosynthesis; L-arginine from L-ornithine and carbamoyl phosphate: step 3/3. This is Argininosuccinate lyase from Clostridium botulinum (strain ATCC 19397 / Type A).